A 446-amino-acid chain; its full sequence is Na(+)-translocating NADH-quinone reductase subunit A (446 aa).

This sequence belongs to the NqrA family. Composed of six subunits; NqrA, NqrB, NqrC, NqrD, NqrE and NqrF.

The enzyme catalyses a ubiquinone + n Na(+)(in) + NADH + H(+) = a ubiquinol + n Na(+)(out) + NAD(+). Functionally, NQR complex catalyzes the reduction of ubiquinone-1 to ubiquinol by two successive reactions, coupled with the transport of Na(+) ions from the cytoplasm to the periplasm. NqrA to NqrE are probably involved in the second step, the conversion of ubisemiquinone to ubiquinol. This is Na(+)-translocating NADH-quinone reductase subunit A from Histophilus somni (strain 129Pt) (Haemophilus somnus).